Reading from the N-terminus, the 717-residue chain is Catalase-peroxidase (717 aa).

The N-terminal stretch at 1–12 (MTSKGMCPVAHG) is a signal peptide. A cross-link (tryptophyl-tyrosyl-methioninium (Trp-Tyr) (with M-247)) is located at residues 93–221 (WHSAGSYRIA…LAAVMMGLIY (129 aa)). H94 functions as the Proton acceptor in the catalytic mechanism. Positions 221–247 (YVNPEGVDGKPDPLKTAQDMRVTFARM) form a cross-link, tryptophyl-tyrosyl-methioninium (Tyr-Met) (with W-93). A heme b-binding site is contributed by H262.

This sequence belongs to the peroxidase family. Peroxidase/catalase subfamily. As to quaternary structure, homodimer or homotetramer. The cofactor is heme b. In terms of processing, formation of the three residue Trp-Tyr-Met cross-link is important for the catalase, but not the peroxidase activity of the enzyme.

It carries out the reaction H2O2 + AH2 = A + 2 H2O. The enzyme catalyses 2 H2O2 = O2 + 2 H2O. Its function is as follows. Bifunctional enzyme with both catalase and broad-spectrum peroxidase activity. In Polynucleobacter asymbioticus (strain DSM 18221 / CIP 109841 / QLW-P1DMWA-1) (Polynucleobacter necessarius subsp. asymbioticus), this protein is Catalase-peroxidase.